The primary structure comprises 941 residues: Bifunctional glutamine synthetase adenylyltransferase/adenylyl-removing enzyme (941 aa).

The segment at 1-437 (MPMPTVSMSP…AAEFAELLAP (437 aa)) is adenylyl removase. The interval 444–941 (PDALADYWRA…FPLGKDETAL (498 aa)) is adenylyl transferase.

It belongs to the GlnE family. Requires Mg(2+) as cofactor.

The enzyme catalyses [glutamine synthetase]-O(4)-(5'-adenylyl)-L-tyrosine + phosphate = [glutamine synthetase]-L-tyrosine + ADP. It carries out the reaction [glutamine synthetase]-L-tyrosine + ATP = [glutamine synthetase]-O(4)-(5'-adenylyl)-L-tyrosine + diphosphate. Involved in the regulation of glutamine synthetase GlnA, a key enzyme in the process to assimilate ammonia. When cellular nitrogen levels are high, the C-terminal adenylyl transferase (AT) inactivates GlnA by covalent transfer of an adenylyl group from ATP to specific tyrosine residue of GlnA, thus reducing its activity. Conversely, when nitrogen levels are low, the N-terminal adenylyl removase (AR) activates GlnA by removing the adenylyl group by phosphorolysis, increasing its activity. The regulatory region of GlnE binds the signal transduction protein PII (GlnB) which indicates the nitrogen status of the cell. The sequence is that of Bifunctional glutamine synthetase adenylyltransferase/adenylyl-removing enzyme from Xanthomonas axonopodis pv. citri (strain 306).